The sequence spans 575 residues: Proline--tRNA ligase, cytoplasmic (575 aa).

It belongs to the class-II aminoacyl-tRNA synthetase family.

It localises to the cytoplasm. It carries out the reaction tRNA(Pro) + L-proline + ATP = L-prolyl-tRNA(Pro) + AMP + diphosphate. This chain is Proline--tRNA ligase, cytoplasmic (PRS), found in Candida albicans (Yeast).